The chain runs to 514 residues: Peptide chain release factor 3 (514 aa).

A tr-type G domain is found at 8-268 (KKRRTFAIIS…TFLEFAPEPH (261 aa)). GTP-binding positions include 17–24 (SHPDAGKT), 85–89 (DTPGH), and 139–142 (NKLD).

It belongs to the TRAFAC class translation factor GTPase superfamily. Classic translation factor GTPase family. PrfC subfamily.

Its subcellular location is the cytoplasm. Increases the formation of ribosomal termination complexes and stimulates activities of RF-1 and RF-2. It binds guanine nucleotides and has strong preference for UGA stop codons. It may interact directly with the ribosome. The stimulation of RF-1 and RF-2 is significantly reduced by GTP and GDP, but not by GMP. The protein is Peptide chain release factor 3 of Streptococcus pyogenes serotype M2 (strain MGAS10270).